Reading from the N-terminus, the 470-residue chain is Protein C-ets-2 (470 aa).

Residues 85–170 (ATFSGFKKEQ…EHLEQMIKEN (86 aa)) form the PNT domain. Position 225 is a phosphoserine (serine 225). Residues 270–291 (ASGKPRDHDSAETGGDSFESSE) form a disordered region. Phosphoserine is present on residues serine 296, serine 299, and serine 302. Residues 364–444 (IQLWQFLLEL…SGKRYVYRFV (81 aa)) constitute a DNA-binding region (ETS).

The protein belongs to the ETS family. Phosphorylation by CDK10 at Ser-225 may create a phosphodegron that targets ETS2 for proteasomal degradation.

Its subcellular location is the nucleus. Functionally, transcription factor activating transcription. Binds specifically the GGA DNA motif in gene promoters and stimulates transcription of those genes. The chain is Protein C-ets-2 (ETS2) from Bos taurus (Bovine).